We begin with the raw amino-acid sequence, 287 residues long: Aromatic amino acid exporter YddG (287 aa).

The Cytoplasmic segment spans residues 1–5; it reads MSRSS. A helical transmembrane segment spans residues 6 to 24; the sequence is ATLIGFTAILLWSTLALAT. Positions 7–136 constitute an EamA 1 domain; sequence TLIGFTAILL…MGLAGTVVLL (130 aa). At 25 to 31 the chain is on the periplasmic side; it reads SSTGAVP. Residues 32-54 traverse the membrane as a helical segment; it reads PFLLTALTFTIGGAVGIAAGLAR. The Cytoplasmic portion of the chain corresponds to 55–65; the sequence is GVGLSVLRQPW. The helical transmembrane segment at 66–86 threads the bilayer; it reads PVWVHGIGGLFGYHFFYFSAL. The Periplasmic segment spans residues 87 to 90; the sequence is KLAP. Residues 91–111 form a helical membrane-spanning segment; it reads PAEAGLVAYLWPLLIVLFSAF. Residues 112–118 are Cytoplasmic-facing; sequence LPGERLR. The chain crosses the membrane as a helical span at residues 119-139; that stretch reads PAHVAGALMGLAGTVVLLGAR. Topologically, residues 140 to 149 are periplasmic; the sequence is AGGFGFAPEY. Residues 150–170 form a helical membrane-spanning segment; the sequence is VPGYLAAAACAVIWSVYSVAS. The EamA 2 domain maps to 151 to 281; the sequence is PGYLAAAACA…ALIVGGAAVA (131 aa). Residues 171–176 are Cytoplasmic-facing; that stretch reads RRFARV. The chain crosses the membrane as a helical span at residues 177–198; sequence PTEVVAGFCLATAALSALCHIL. Residues 199 to 208 are Periplasmic-facing; the sequence is FEPSVWPVGS. The chain crosses the membrane as a helical span at residues 209–233; it reads EWLAVVALGIGPVGIAFYTWDIGMK. Topologically, residues 234–236 are cytoplasmic; sequence RGD. A helical membrane pass occupies residues 237 to 258; that stretch reads VRLLGVLSYAAPVLSTLLLVVA. The Periplasmic segment spans residues 259–264; that stretch reads GFAAPS. The helical transmembrane segment at 265–284 threads the bilayer; sequence GALAIACALIVGGAAVATLL. At 285-287 the chain is on the cytoplasmic side; it reads ARR.

This sequence belongs to the drug/metabolite transporter (DMT) superfamily. Aromatic amino acid/paraquat exporter (ArAA/P-E) (TC 2.A.7.17) family.

It is found in the cell inner membrane. The catalysed reaction is L-threonine(in) = L-threonine(out). It carries out the reaction L-methionine(in) = L-methionine(out). The enzyme catalyses L-lysine(in) = L-lysine(out). It catalyses the reaction L-glutamate(out) = L-glutamate(in). In terms of biological role, amino acid transporter with broad substrate specificity. Can transport various amino acids, including L-threonine, L-methionine, L-lysine and L-glutamate. This chain is Aromatic amino acid exporter YddG, found in Ancylobacter novellus (strain ATCC 8093 / DSM 506 / JCM 20403 / CCM 1077 / IAM 12100 / NBRC 12443 / NCIMB 10456) (Starkeya novella).